Reading from the N-terminus, the 395-residue chain is ATP-dependent RNA helicase eIF4A (395 aa).

Residue Ser-2 is modified to N-acetylserine. The Q motif motif lies at 22–50 (YKFDDMELDENLLRGVFGYGFEEPSAIQQ). In terms of domain architecture, Helicase ATP-binding spans 53–222 (IMPIIEGHDV…TKFMRNPVRI (170 aa)). 66–73 (AQSGTGKT) lines the ATP pocket. The residue at position 73 (Thr-73) is a Phosphothreonine. Phosphoserine is present on residues Ser-77 and Ser-129. Thr-146 is subject to Phosphothreonine. The short motif at 170-173 (DEAD) is the DEAD box element. Residues 233–394 (GIKQFYVNVE…ELPSDIATLL (162 aa)) enclose the Helicase C-terminal domain.

The protein belongs to the DEAD box helicase family. eIF4A subfamily. In terms of assembly, component of the eIF4F complex, which composition varies with external and internal environmental conditions. It is composed of at least eIF4A, eIF4E and eIF4G.

The protein localises to the cytoplasm. The catalysed reaction is ATP + H2O = ADP + phosphate + H(+). Its function is as follows. ATP-dependent RNA helicase which is a subunit of the eIF4F complex involved in cap recognition and is required for mRNA binding to ribosome. In the current model of translation initiation, eIF4A unwinds RNA secondary structures in the 5'-UTR of mRNAs which is necessary to allow efficient binding of the small ribosomal subunit, and subsequent scanning for the initiator codon. The protein is ATP-dependent RNA helicase eIF4A (TIF1) of Saccharomyces cerevisiae (strain YJM789) (Baker's yeast).